The primary structure comprises 128 residues: Small ribosomal subunit protein uS12 (128 aa).

Position 89 is a 3-methylthioaspartic acid (D89).

The protein belongs to the universal ribosomal protein uS12 family. Part of the 30S ribosomal subunit. Contacts proteins S8 and S17. May interact with IF1 in the 30S initiation complex.

Functionally, with S4 and S5 plays an important role in translational accuracy. Interacts with and stabilizes bases of the 16S rRNA that are involved in tRNA selection in the A site and with the mRNA backbone. Located at the interface of the 30S and 50S subunits, it traverses the body of the 30S subunit contacting proteins on the other side and probably holding the rRNA structure together. The combined cluster of proteins S8, S12 and S17 appears to hold together the shoulder and platform of the 30S subunit. The sequence is that of Small ribosomal subunit protein uS12 from Campylobacter jejuni subsp. doylei (strain ATCC BAA-1458 / RM4099 / 269.97).